We begin with the raw amino-acid sequence, 968 residues long: Protein translocase subunit SecA (968 aa).

ATP is bound by residues Gln99, 117–121, and Asp631; that span reads GEGKT.

This sequence belongs to the SecA family. As to quaternary structure, monomer and homodimer. Part of the essential Sec protein translocation apparatus which comprises SecA, SecYEG and auxiliary proteins SecDF. Other proteins may also be involved.

It is found in the cell inner membrane. Its subcellular location is the cytoplasm. It catalyses the reaction ATP + H2O + cellular proteinSide 1 = ADP + phosphate + cellular proteinSide 2.. Its function is as follows. Part of the Sec protein translocase complex. Interacts with the SecYEG preprotein conducting channel. Has a central role in coupling the hydrolysis of ATP to the transfer of proteins into and across the cell membrane, serving as an ATP-driven molecular motor driving the stepwise translocation of polypeptide chains across the membrane. In Chlamydia muridarum (strain MoPn / Nigg), this protein is Protein translocase subunit SecA.